A 110-amino-acid polypeptide reads, in one-letter code: MHGPKPTVQEIVLELCPCNEIEPVDLVCHEQLGDSDDEIDEPDHAVNHHQHQLLARRDEQQRHTIQCTCCKCNNLLQLVVEASRENLRNVELLFMDSLNFVCPWCATETQ.

An E7 terminal domain region spans residues 1–47 (MHGPKPTVQEIVLELCPCNEIEPVDLVCHEQLGDSDDEIDEPDHAVN). Residues 26 to 30 (LVCHE) carry the LXCXE motif; interaction with host RB1 and TMEM173/STING motif. A zinc finger spans residues 69–105 (CCKCNNLLQLVVEASRENLRNVELLFMDSLNFVCPWC). The Nuclear export signal signature appears at 87–95 (LRNVELLFM).

This sequence belongs to the papillomaviridae E7 protein family. In terms of assembly, homodimer. Homooligomer. Interacts with host RB1; this interaction induces dissociation of RB1-E2F1 complex thereby disrupting RB1 activity. Interacts with host EP300; this interaction represses EP300 transcriptional activity. Interacts with protein E2; this interaction inhibits E7 oncogenic activity. Interacts with host TMEM173/STING; this interaction impairs the ability of TMEM173/STING to sense cytosolic DNA and promote the production of type I interferon (IFN-alpha and IFN-beta). Post-translationally, highly phosphorylated.

It is found in the host cytoplasm. Its subcellular location is the host nucleus. Plays a role in viral genome replication by driving entry of quiescent cells into the cell cycle. Stimulation of progression from G1 to S phase allows the virus to efficiently use the cellular DNA replicating machinery to achieve viral genome replication. E7 protein has both transforming and trans-activating activities. Induces the disassembly of the E2F1 transcription factor from RB1, with subsequent transcriptional activation of E2F1-regulated S-phase genes. Interferes with host histone deacetylation mediated by HDAC1 and HDAC2, leading to transcription activation. Also plays a role in the inhibition of both antiviral and antiproliferative functions of host interferon alpha. Interaction with host TMEM173/STING impairs the ability of TMEM173/STING to sense cytosolic DNA and promote the production of type I interferon (IFN-alpha and IFN-beta). This Human papillomavirus type ME180 protein is Protein E7.